Here is a 184-residue protein sequence, read N- to C-terminus: Ribosome-recycling factor (184 aa).

This sequence belongs to the RRF family.

Its subcellular location is the cytoplasm. In terms of biological role, responsible for the release of ribosomes from messenger RNA at the termination of protein biosynthesis. May increase the efficiency of translation by recycling ribosomes from one round of translation to another. The chain is Ribosome-recycling factor from Desulfotalea psychrophila (strain LSv54 / DSM 12343).